Reading from the N-terminus, the 301-residue chain is Phosphatidylserine decarboxylase proenzyme (301 aa).

Catalysis depends on charge relay system; for autoendoproteolytic cleavage activity residues Asp117, His173, and Ser260. Catalysis depends on Ser260, which acts as the Schiff-base intermediate with substrate; via pyruvic acid; for decarboxylase activity. Pyruvic acid (Ser); by autocatalysis is present on Ser260.

The protein belongs to the phosphatidylserine decarboxylase family. PSD-B subfamily. Prokaryotic type II sub-subfamily. Heterodimer of a large membrane-associated beta subunit and a small pyruvoyl-containing alpha subunit. Pyruvate is required as a cofactor. Is synthesized initially as an inactive proenzyme. Formation of the active enzyme involves a self-maturation process in which the active site pyruvoyl group is generated from an internal serine residue via an autocatalytic post-translational modification. Two non-identical subunits are generated from the proenzyme in this reaction, and the pyruvate is formed at the N-terminus of the alpha chain, which is derived from the carboxyl end of the proenzyme. The autoendoproteolytic cleavage occurs by a canonical serine protease mechanism, in which the side chain hydroxyl group of the serine supplies its oxygen atom to form the C-terminus of the beta chain, while the remainder of the serine residue undergoes an oxidative deamination to produce ammonia and the pyruvoyl prosthetic group on the alpha chain. During this reaction, the Ser that is part of the protease active site of the proenzyme becomes the pyruvoyl prosthetic group, which constitutes an essential element of the active site of the mature decarboxylase.

It localises to the cell membrane. It catalyses the reaction a 1,2-diacyl-sn-glycero-3-phospho-L-serine + H(+) = a 1,2-diacyl-sn-glycero-3-phosphoethanolamine + CO2. It functions in the pathway phospholipid metabolism; phosphatidylethanolamine biosynthesis; phosphatidylethanolamine from CDP-diacylglycerol: step 2/2. Catalyzes the formation of phosphatidylethanolamine (PtdEtn) from phosphatidylserine (PtdSer). This is Phosphatidylserine decarboxylase proenzyme from Chlamydia trachomatis serovar L2 (strain ATCC VR-902B / DSM 19102 / 434/Bu).